Reading from the N-terminus, the 151-residue chain is Ribosome maturation factor RimP (151 aa).

Belongs to the RimP family.

Its subcellular location is the cytoplasm. In terms of biological role, required for maturation of 30S ribosomal subunits. This chain is Ribosome maturation factor RimP, found in Shewanella halifaxensis (strain HAW-EB4).